Consider the following 206-residue polypeptide: High-affinity nitrate transporter-activating protein 2.1 (206 aa).

The signal sequence occupies residues 1 to 27 (MARLAGVAALSLVLVLLGAGVPRPAAA). A helical membrane pass occupies residues 180-200 (VAAGVFSTFSIAALAFFFVVE).

It belongs to the NAR2 family. In terms of assembly, heterotetramer composed of two NRT2.1, NRT2.2 or NRT2.3 and two NAR2.1. Interacts with NRT2.1, NRT2.2 and isoform 1 of NRT2.3. Expressed in epidermal cells of primary and lateral roots, root-shoot junction zone, vascular tissues of adventitious root primordia, stems and coleoptiles of germinating seeds.

It is found in the cell membrane. Its function is as follows. Acts as a dual component transporter with NTR2.1, NRT2.2 and NRT2.3. Required for high-affinity nitrate transport. Involved in the regulation of NRT2.1, NRT2.2 and NRT2.3 expression, and in both, HATS (high-affinity transport system) and LATS (low-affinity transport system) activities in plant roots. Imports nitrate with high affinity when expressed with NTR2.1, NTR2.2 or NTR2.3 in a heterologous system (Xenopus oocytes). The chain is High-affinity nitrate transporter-activating protein 2.1 (NAR2.1) from Oryza sativa subsp. japonica (Rice).